The sequence spans 209 residues: uncharacterized protein (209 aa).

Residues 1 to 17 (MKKLVTGLLALSLFLAA) form the signal peptide. Residues 17–106 (ACGQDSDQQK…SGQTTNNQKS (90 aa)) are disordered. A lipid anchor (N-palmitoyl cysteine) is attached at Cys18. Cys18 carries the S-diacylglycerol cysteine lipid modification. The span at 23 to 70 (DQQKDSNKEKDDKAKTEQQDKKTNDSSKDKKDNKDDSKDVNKDNKDNS) shows a compositional bias: basic and acidic residues. The segment covering 71 to 106 (ANDNQQQSNSNATNNDQNQTNNNQSNSGQTTNNQKS) has biased composition (low complexity).

It is found in the cell membrane. This is an uncharacterized protein from Staphylococcus aureus (strain MRSA252).